A 197-amino-acid polypeptide reads, in one-letter code: 7-methyl-GTP pyrophosphatase (197 aa).

Aspartate 69 acts as the Proton acceptor in catalysis.

The protein belongs to the Maf family. YceF subfamily. A divalent metal cation is required as a cofactor.

It localises to the cytoplasm. The enzyme catalyses N(7)-methyl-GTP + H2O = N(7)-methyl-GMP + diphosphate + H(+). Nucleoside triphosphate pyrophosphatase that hydrolyzes 7-methyl-GTP (m(7)GTP). May have a dual role in cell division arrest and in preventing the incorporation of modified nucleotides into cellular nucleic acids. The polypeptide is 7-methyl-GTP pyrophosphatase (Pectobacterium atrosepticum (strain SCRI 1043 / ATCC BAA-672) (Erwinia carotovora subsp. atroseptica)).